A 339-amino-acid chain; its full sequence is DNA-directed RNA polymerase subunit alpha (339 aa).

The tract at residues 1 to 235 (MVLQKNWQSL…DQLQLFINFD (235 aa)) is alpha N-terminal domain (alpha-NTD). The tract at residues 251–339 (FNRNLLRKVD…DLAKRLDETF (89 aa)) is alpha C-terminal domain (alpha-CTD).

The protein belongs to the RNA polymerase alpha chain family. As to quaternary structure, homodimer. The RNAP catalytic core consists of 2 alpha, 1 beta, 1 beta' and 1 omega subunit. When a sigma factor is associated with the core the holoenzyme is formed, which can initiate transcription.

It carries out the reaction RNA(n) + a ribonucleoside 5'-triphosphate = RNA(n+1) + diphosphate. DNA-dependent RNA polymerase catalyzes the transcription of DNA into RNA using the four ribonucleoside triphosphates as substrates. The polypeptide is DNA-directed RNA polymerase subunit alpha (Gluconobacter oxydans (strain 621H) (Gluconobacter suboxydans)).